Reading from the N-terminus, the 92-residue chain is Large ribosomal subunit protein bL28 (92 aa).

Belongs to the bacterial ribosomal protein bL28 family.

The sequence is that of Large ribosomal subunit protein bL28 from Borrelia garinii subsp. bavariensis (strain ATCC BAA-2496 / DSM 23469 / PBi) (Borreliella bavariensis).